The chain runs to 364 residues: UDP-N-acetylglucosamine--N-acetylmuramyl-(pentapeptide) pyrophosphoryl-undecaprenol N-acetylglucosamine transferase (364 aa).

UDP-N-acetyl-alpha-D-glucosamine is bound by residues 10–12 (TGG), Asn-124, Arg-165, Ser-193, Ile-248, and Gln-293.

The protein belongs to the glycosyltransferase 28 family. MurG subfamily.

Its subcellular location is the cell inner membrane. The enzyme catalyses di-trans,octa-cis-undecaprenyl diphospho-N-acetyl-alpha-D-muramoyl-L-alanyl-D-glutamyl-meso-2,6-diaminopimeloyl-D-alanyl-D-alanine + UDP-N-acetyl-alpha-D-glucosamine = di-trans,octa-cis-undecaprenyl diphospho-[N-acetyl-alpha-D-glucosaminyl-(1-&gt;4)]-N-acetyl-alpha-D-muramoyl-L-alanyl-D-glutamyl-meso-2,6-diaminopimeloyl-D-alanyl-D-alanine + UDP + H(+). The protein operates within cell wall biogenesis; peptidoglycan biosynthesis. Cell wall formation. Catalyzes the transfer of a GlcNAc subunit on undecaprenyl-pyrophosphoryl-MurNAc-pentapeptide (lipid intermediate I) to form undecaprenyl-pyrophosphoryl-MurNAc-(pentapeptide)GlcNAc (lipid intermediate II). In Geobacter sulfurreducens (strain ATCC 51573 / DSM 12127 / PCA), this protein is UDP-N-acetylglucosamine--N-acetylmuramyl-(pentapeptide) pyrophosphoryl-undecaprenol N-acetylglucosamine transferase.